We begin with the raw amino-acid sequence, 207 residues long: Outer-membrane lipoprotein LolB (207 aa).

A signal peptide spans 1–21; the sequence is MTLPDFRLIRLLPLASLVLTA. Residue Cys22 is the site of N-palmitoyl cysteine attachment. A lipid anchor (S-diacylglycerol cysteine) is attached at Cys22.

It belongs to the LolB family. In terms of assembly, monomer.

Its subcellular location is the cell outer membrane. Plays a critical role in the incorporation of lipoproteins in the outer membrane after they are released by the LolA protein. This chain is Outer-membrane lipoprotein LolB, found in Salmonella arizonae (strain ATCC BAA-731 / CDC346-86 / RSK2980).